The primary structure comprises 609 residues: Dihydroxy-acid dehydratase 1 (609 aa).

Asp-81 contributes to the Mg(2+) binding site. Residue Cys-122 participates in [2Fe-2S] cluster binding. Asp-123 and Lys-124 together coordinate Mg(2+). Lys-124 carries the post-translational modification N6-carboxylysine. Cys-195 serves as a coordination point for [2Fe-2S] cluster. Mg(2+) is bound at residue Glu-491. Catalysis depends on Ser-517, which acts as the Proton acceptor.

This sequence belongs to the IlvD/Edd family. Homodimer. [2Fe-2S] cluster serves as cofactor. Requires Mg(2+) as cofactor.

It catalyses the reaction (2R)-2,3-dihydroxy-3-methylbutanoate = 3-methyl-2-oxobutanoate + H2O. The enzyme catalyses (2R,3R)-2,3-dihydroxy-3-methylpentanoate = (S)-3-methyl-2-oxopentanoate + H2O. It participates in amino-acid biosynthesis; L-isoleucine biosynthesis; L-isoleucine from 2-oxobutanoate: step 3/4. Its pathway is amino-acid biosynthesis; L-valine biosynthesis; L-valine from pyruvate: step 3/4. Functions in the biosynthesis of branched-chain amino acids. Catalyzes the dehydration of (2R,3R)-2,3-dihydroxy-3-methylpentanoate (2,3-dihydroxy-3-methylvalerate) into 2-oxo-3-methylpentanoate (2-oxo-3-methylvalerate) and of (2R)-2,3-dihydroxy-3-methylbutanoate (2,3-dihydroxyisovalerate) into 2-oxo-3-methylbutanoate (2-oxoisovalerate), the penultimate precursor to L-isoleucine and L-valine, respectively. The chain is Dihydroxy-acid dehydratase 1 from Acinetobacter baylyi (strain ATCC 33305 / BD413 / ADP1).